We begin with the raw amino-acid sequence, 487 residues long: Glutamyl-tRNA(Gln) amidotransferase subunit A (487 aa).

Residues Lys79 and Ser154 each act as charge relay system in the active site. The active-site Acyl-ester intermediate is Ser178.

The protein belongs to the amidase family. GatA subfamily. In terms of assembly, heterotrimer of A, B and C subunits.

The catalysed reaction is L-glutamyl-tRNA(Gln) + L-glutamine + ATP + H2O = L-glutaminyl-tRNA(Gln) + L-glutamate + ADP + phosphate + H(+). Its function is as follows. Allows the formation of correctly charged Gln-tRNA(Gln) through the transamidation of misacylated Glu-tRNA(Gln) in organisms which lack glutaminyl-tRNA synthetase. The reaction takes place in the presence of glutamine and ATP through an activated gamma-phospho-Glu-tRNA(Gln). The sequence is that of Glutamyl-tRNA(Gln) amidotransferase subunit A from Heliobacterium modesticaldum (strain ATCC 51547 / Ice1).